The following is a 325-amino-acid chain: Beta-ketoacyl-[acyl-carrier-protein] synthase III 2 (325 aa).

Residues C113 and H250 contribute to the active site. Residues 251–255 (SANLR) form an ACP-binding region. Residue N280 is part of the active site.

It belongs to the thiolase-like superfamily. FabH family. In terms of assembly, homodimer.

The protein resides in the cytoplasm. It catalyses the reaction 3-methylbutanoyl-CoA + malonyl-[ACP] + H(+) = 5-methyl-3-oxohexanoyl-[ACP] + CO2 + CoA. The catalysed reaction is 2-methylpropanoyl-CoA + malonyl-[ACP] + H(+) = 4-methyl-3-oxopentanoyl-[ACP] + CO2 + CoA. The enzyme catalyses (2S)-2-methylbutanoyl-CoA + malonyl-[ACP] + H(+) = (4S)-4-methyl-3-oxohexanoyl-[ACP] + CO2 + CoA. It carries out the reaction malonyl-[ACP] + acetyl-CoA + H(+) = 3-oxobutanoyl-[ACP] + CO2 + CoA. It catalyses the reaction malonyl-[ACP] + propanoyl-CoA + H(+) = 3-oxopentanoyl-[ACP] + CO2 + CoA. The catalysed reaction is butanoyl-CoA + malonyl-[ACP] + H(+) = 3-oxohexanoyl-[ACP] + CO2 + CoA. The enzyme catalyses pentanoyl-CoA + malonyl-[ACP] + H(+) = 3-oxoheptanoyl-[ACP] + CO2 + CoA. It carries out the reaction hexanoyl-CoA + malonyl-[ACP] + H(+) = 3-oxooctanoyl-[ACP] + CO2 + CoA. It catalyses the reaction heptanoyl-CoA + malonyl-[ACP] + H(+) = 3-oxononanoyl-[ACP] + CO2 + CoA. The protein operates within lipid metabolism; fatty acid biosynthesis. Functionally, catalyzes the condensation reaction of fatty acid synthesis by the addition to an acyl acceptor of two carbons from malonyl-ACP. Catalyzes the first condensation reaction which initiates fatty acid synthesis and may therefore play a role in governing the total rate of fatty acid production. Possesses both acetoacetyl-ACP synthase and acetyl transacylase activities. Has some substrate specificity for branched chain acyl-CoA, determining the biosynthesis of branched-chain of fatty acids instead of straight-chain. This Bacillus subtilis (strain 168) protein is Beta-ketoacyl-[acyl-carrier-protein] synthase III 2.